We begin with the raw amino-acid sequence, 362 residues long: Serine/threonine-protein kinase-like protein At3g51990 (362 aa).

The signal sequence occupies residues 1-24; the sequence is MGYLSCKAGSAVAIAVSSAASTSG. Low complexity predominate over residues 21-32; the sequence is STSGSTSSKASA. The segment at 21 to 43 is disordered; the sequence is STSGSTSSKASAPPESPIEDRPR. The 271-residue stretch at 59–329 folds into the Protein kinase domain; it reads FDINNLLGRG…PGMEEVVGWL (271 aa). ATP contacts are provided by residues 65-73 and lysine 86; that span reads LGRGSHGSV. An N-linked (GlcNAc...) asparagine glycan is attached at asparagine 136. Aspartate 185 (proton acceptor) is an active-site residue. A Phosphoserine modification is found at serine 219. Phosphothreonine occurs at positions 220 and 225. Phosphotyrosine is present on tyrosine 233.

The protein belongs to the protein kinase superfamily. Ser/Thr protein kinase family.

It is found in the secreted. It carries out the reaction L-seryl-[protein] + ATP = O-phospho-L-seryl-[protein] + ADP + H(+). The catalysed reaction is L-threonyl-[protein] + ATP = O-phospho-L-threonyl-[protein] + ADP + H(+). In Arabidopsis thaliana (Mouse-ear cress), this protein is Serine/threonine-protein kinase-like protein At3g51990.